Reading from the N-terminus, the 146-residue chain is Hemoglobin subunit beta (146 aa).

N-acetylvaline is present on valine 1. The Globin domain maps to 2-146 (HLTAEEKSLV…VANALAHKYH (145 aa)). Residue threonine 12 is modified to Phosphothreonine. Serine 44 is modified (phosphoserine). Lysine 59 carries the N6-acetyllysine modification. Histidine 63 serves as a coordination point for heme b. N6-acetyllysine is present on lysine 82. Histidine 92 contacts heme b. Cysteine 93 carries the S-nitrosocysteine modification. N6-acetyllysine is present on lysine 144.

This sequence belongs to the globin family. As to quaternary structure, heterotetramer of two alpha chains and two beta chains. In terms of tissue distribution, red blood cells.

Its function is as follows. Involved in oxygen transport from the lung to the various peripheral tissues. This Vulpes vulpes (Red fox) protein is Hemoglobin subunit beta (HBB).